The primary structure comprises 339 residues: Nitrilase 2 (339 aa).

Position 2 is an N-acetylserine (S2). Residues 18-290 (VRATIVQAST…EGLITADLDL (273 aa)) enclose the CN hydrolase domain. The active-site Proton acceptor is E58. The Proton donor role is filled by K145. C179 acts as the Nucleophile in catalysis.

The protein belongs to the carbon-nitrogen hydrolase superfamily. Nitrilase family.

The protein localises to the cell membrane. The enzyme catalyses a nitrile + 2 H2O = a carboxylate + NH4(+). Can convert indole-3-acetonitrile to the plant hormone indole-3-acetic acid. The polypeptide is Nitrilase 2 (NIT2) (Arabidopsis thaliana (Mouse-ear cress)).